The following is a 509-amino-acid chain: 2-isopropylmalate synthase (509 aa).

The 263-residue stretch at 4–266 (VRIFDTTLRD…YTGIKTEEIY (263 aa)) folds into the Pyruvate carboxyltransferase domain. Residues Asp13, His201, His203, and Asn237 each contribute to the Mn(2+) site. Residues 390–509 (TLDYFHISTG…FDYQAKGEKQ (120 aa)) are regulatory domain.

Belongs to the alpha-IPM synthase/homocitrate synthase family. LeuA type 1 subfamily. As to quaternary structure, homodimer. The cofactor is Mn(2+).

It is found in the cytoplasm. It catalyses the reaction 3-methyl-2-oxobutanoate + acetyl-CoA + H2O = (2S)-2-isopropylmalate + CoA + H(+). It functions in the pathway amino-acid biosynthesis; L-leucine biosynthesis; L-leucine from 3-methyl-2-oxobutanoate: step 1/4. Its function is as follows. Catalyzes the condensation of the acetyl group of acetyl-CoA with 3-methyl-2-oxobutanoate (2-ketoisovalerate) to form 3-carboxy-3-hydroxy-4-methylpentanoate (2-isopropylmalate). This chain is 2-isopropylmalate synthase, found in Carboxydothermus hydrogenoformans (strain ATCC BAA-161 / DSM 6008 / Z-2901).